The primary structure comprises 78 residues: Delta-conotoxin-like TxMKLT1-0111 (78 aa).

An N-terminal signal peptide occupies residues 1 to 22 (MKLTCMMIVAVLFLTAWTFATA). The propeptide occupies 23 to 49 (DDSGNGLENLFSNAHHQMKNPEASKLN). Intrachain disulfides connect Cys-53/Cys-68, Cys-60/Cys-72, and Cys-67/Cys-77.

Belongs to the conotoxin O1 superfamily. In terms of tissue distribution, expressed by the venom duct.

It localises to the secreted. Delta-conotoxins bind to site 6 of voltage-gated sodium channels (Nav) and inhibit the inactivation process. This Conus textile (Cloth-of-gold cone) protein is Delta-conotoxin-like TxMKLT1-0111.